Here is a 268-residue protein sequence, read N- to C-terminus: Putative hydro-lyase ABSDF2257 (268 aa).

Belongs to the D-glutamate cyclase family.

In Acinetobacter baumannii (strain SDF), this protein is Putative hydro-lyase ABSDF2257.